Consider the following 2368-residue polypeptide: Highly reducing polyketide synthase cla2 (2368 aa).

Positions 10–434 (QIPIAIVGLG…GTNGLVVLEA (425 aa)) constitute a Ketosynthase family 3 (KS3) domain. Residues cysteine 182, histidine 317, and histidine 357 each act as for beta-ketoacyl synthase activity in the active site. The tract at residues 548–877 (FVFTGQGAQW…RGQNALDTSL (330 aa)) is malonyl-CoA:ACP transacylase (MAT) domain. Catalysis depends on serine 638, which acts as the For malonyltransferase activity. The tract at residues 936–1071 (HSMIGLKQPM…GLVAIEYTNK (136 aa)) is N-terminal hotdog fold. The tract at residues 936–1175 (HSMIGLKQPM…AIFQSIFGST (240 aa)) is dehydratase (DH) domain. In terms of domain architecture, PKS/mFAS DH spans 936 to 1255 (HSMIGLKQPM…MTEPEVGDDA (320 aa)). The active-site Proton acceptor; for dehydratase activity is histidine 968. Residues 1099–1255 (PLMIRREKFY…MTEPEVGDDA (157 aa)) form a C-terminal hotdog fold region. Aspartate 1165 serves as the catalytic Proton donor; for dehydratase activity. The tract at residues 1655–1967 (GFLDSLQFIK…QGKHRGKLVL (313 aa)) is enoylreductase (ER) domain. Residues 1991–2170 (ATYLIIGGLG…AVAVNLTIIR (180 aa)) form a catalytic ketoreductase (KRc) domain region. Residues 2283–2360 (QASEIITEGL…VLAKTIASRS (78 aa)) enclose the Carrier domain. Serine 2320 is modified (O-(pantetheine 4'-phosphoryl)serine).

It participates in secondary metabolite biosynthesis. Functionally, highly reducing polyketide synthase; part of the gene cluster that mediates the biosynthesis of cladosporin, a tricyclic octaketide that acts as an antimalarial agent though inhibition of the Plasmodium falciparum lysyl-tRNA synthetase. The highly reducing polyketide synthase cla2 is responsible for biosynthesis up to the pentaketide stage, including of the tetrahydropyran (THP) ring, whereas the three subsequent ketide extensions with no reduction are catalyzed by the non-reducing polyketide synthase cla3. This is Highly reducing polyketide synthase cla2 from Cladosporium cladosporioides.